The sequence spans 316 residues: C-type lectin domain family 10 member A (316 aa).

Residues 1 to 39 lie on the Cytoplasmic side of the membrane; that stretch reads MTRTYENFQYLENKVKVQGFKNGPLPLQSLLQRLCSGPC. The short motif at 5–8 is the Endocytosis signal element; the sequence is YENF. A helical; Signal-anchor for type II membrane protein transmembrane segment spans residues 40–60; that stretch reads HLLLSLGLGLLLLVIICVVGF. Topologically, residues 61–316 are extracellular; the sequence is QNSKFQRDLV…GLGQTSQESH (256 aa). N78 and N173 each carry an N-linked (GlcNAc...) asparagine glycan. Residues 85–176 adopt a coiled-coil conformation; it reads AEIQALTSQG…VATLNNNAST (92 aa). Intrachain disulfides connect C181–C192, C209–C304, and C282–C296. The 118-residue stretch at 188 to 305 folds into the C-type lectin domain; sequence HQDSCYWFSH…CQRPYHWVCE (118 aa). The Ca(2+) site is built by V218, N220, E224, and D243. Residues Q267 and D269 each contribute to the a glycoprotein site. The Ca(2+) site is built by D269, D270, E280, and D281. An a glycoprotein-binding site is contributed by E280. A glycoprotein contacts are provided by H286 and N292. Residues N292, D293, and E305 each contribute to the Ca(2+) site.

In terms of assembly, interacts with A-, B- and C-domain containing PTPRC/CD45 isoforms: isoform 1/CD45ABC, isoform 3/CD45AB, isoform 5/CD45BC and isoform 7/CD45B. Does not interact with PTPRC/CD45 isoform 2/CD45RO, a memory T cell marker. Expressed in myeloid antigen presenting cells in lymph nodes and skin (at protein level). Expressed in dermal dendritic cells (at protein level).

The protein localises to the cell membrane. The protein resides in the early endosome membrane. It is found in the lysosome membrane. Its function is as follows. C-type lectin receptor involved in recognition of N-acetylgalactosamine (GalNAc)-terminated glycans by myeloid antigen presenting cells (APCs). Binds in a Ca(2+)-dependent manner to alpha- and beta-linked GalNAc residues on glycoprotein and glycolipid antigens, including alphaGalNAc- and Galbeta1-&gt;3GalNAc-O-Ser/Thr also known as Tn and T antigens, LacdiNAc epitope GalNAcbeta1-&gt;4GlcNAc and its derivative GalNAcbeta1-&gt;4-(Fucalpha1-&gt;3)GlcNAc, O-linked core 5 and 6 glycans, and GM2 and GD2 gangliosides. Acts as a signaling receptor at the interface of APC-T cell interactions. On immature dendritic cells, recognizes Tn antigen-carrying PTPRC/CD45 receptor on effector T cells and downregulates PTRPN/CD45 phosphatase activity with an impact on T cell activation threshold, cytokine production and proliferation. Modulates dendritic cell maturation toward a tolerogenic phenotype leading to generation of regulatory CD4-positive T cell subset with immune suppressive functions. Acts as an endocytic pattern recognition receptor involved in antitumor immunity. During tumorigenesis, recognizes Tn antigens and its sialylated forms Neu5Ac-Tn and Neu5Gc-Tn expressed on tumor cell mucins. On immature dendritic cells, can internalize Tn-terminated immunogens and target them to endolysosomal compartment for MHC class I and II antigen presentation to CD8-positive and CD4-positive T cells, respectively. This is C-type lectin domain family 10 member A from Homo sapiens (Human).